The sequence spans 44 residues: ANFDIINQXPYTVXAAASPGGGRRLETGQSXXLQVAPGTTXAAI.

Belongs to the thaumatin family.

In Glebionis coronaria (Crown daisy), this protein is Thaumatin-like protein 5.